Consider the following 96-residue polypeptide: UPF0213 protein Lreu_0682 (96 aa).

The GIY-YIG domain occupies Glu4–Lys81.

Belongs to the UPF0213 family.

This is UPF0213 protein Lreu_0682 from Limosilactobacillus reuteri (strain DSM 20016) (Lactobacillus reuteri).